The chain runs to 535 residues: MSVRVLNPNAEVLNKSAALHMTINAAKGLQDVLKSNLGPKGTIKMLVGGSGDIKLTKDGNTLLKEMQIQNPTAIMIARTAVAQDDISGDGTTSTVIFIGELMKQSERCIDEGMHPRVLVDGFEIAKRATLQFLDTFKTPVVMGDEPDKEILKMVARTTLRTKLYEGLADQLTDIVVNSVLCIRKPQEPIDLFMVEIMHMRHKFDVDTRLVEGLVLDHGSRHPDMKRRAENCHILTCNVSLEYEKSEINAGFFYSNAEQREAMVTAERRSVDERVQKIIELKNKVCAGNDNSFVILNQKGIDPPSLDLLAREGIIALRRAKRRNMERLVLACGGEAVNSVDDLTPDCLGWAGLVYEHVLGEEKYTFVEQVKNPHSCTILIKGPNDHTIAQIKDAVRDGLRSVKNTLEDECVVLGAGAFEVAARQHLINEVKKTVQGRAQLGVEAFANALLVVPKTLAENAGLDTQDVIISLTSEHDKGNIVGLDLQDGEPVDPQLAGIFDNYSVKRQLINSGPVIASQLLLVDEVIRAGRNMRKPT.

The protein belongs to the TCP-1 chaperonin family. As to quaternary structure, heterooligomeric complex of about 850 to 900 kDa that forms two stacked rings, 12 to 16 nm in diameter.

Its subcellular location is the cytoplasm. Its function is as follows. Molecular chaperone; assists the folding of proteins upon ATP hydrolysis. Known to play a role, in vitro, in the folding of actin and tubulin. The sequence is that of T-complex protein 1 subunit zeta 1 from Arabidopsis thaliana (Mouse-ear cress).